Reading from the N-terminus, the 137-residue chain is ATP synthase epsilon chain (137 aa).

The protein belongs to the ATPase epsilon chain family. F-type ATPases have 2 components, CF(1) - the catalytic core - and CF(0) - the membrane proton channel. CF(1) has five subunits: alpha(3), beta(3), gamma(1), delta(1), epsilon(1). CF(0) has three main subunits: a, b and c.

The protein resides in the cellular thylakoid membrane. Produces ATP from ADP in the presence of a proton gradient across the membrane. The polypeptide is ATP synthase epsilon chain (Trichodesmium erythraeum (strain IMS101)).